The primary structure comprises 126 residues: Fatty acid-binding protein 2, liver (126 aa).

Residues 54–56, 99–101, and Arg-121 contribute to the cholate site; these read TPN and HIQ.

The protein belongs to the calycin superfamily. Fatty-acid binding protein (FABP) family.

The protein localises to the cytoplasm. In terms of biological role, binds free fatty acids and their coenzyme A derivatives, bilirubin, and some other small molecules in the cytoplasm. May be involved in intracellular lipid transport. The specificity of axolotl L-FABP differs from that of LB-FABP. Binds 2 ligands per protein molecule. The sequence is that of Fatty acid-binding protein 2, liver from Ambystoma mexicanum (Axolotl).